Here is an 80-residue protein sequence, read N- to C-terminus: MGMRMMFTVFLLVVLATTVVSIPSDRASDGRNAEVNERAPWLVPSTITTCCGYDPGSMCPPCMCNNTCKPKPKKSGRRNH.

The N-terminal stretch at 1-21 (MGMRMMFTVFLLVVLATTVVS) is a signal peptide. Residues 22-38 (IPSDRASDGRNAEVNER) constitute a propeptide that is removed on maturation. The residue at position 40 (Pro40) is a 4-hydroxyproline. A glycan (O-linked (HexNAc...) serine) is linked at Ser45. A 4-hydroxyproline mark is found at Pro55, Pro60, Pro61, Pro70, and Pro72. Ser75 is subject to Serine amide. The propeptide occupies 76–80 (GRRNH).

The protein belongs to the conotoxin A superfamily. In terms of processing, contains 3 disulfide bonds. Expressed by the venom duct.

It localises to the secreted. Neurotoxin with probable activity on sodium channel. Induces intense repetitive firing of the frog neuromuscular junction, leading to a tetanic contracture in muscle fiber (spastic paralysis). In vivo, shows the same effect as the whole venom when injected on fish prey. The sequence is that of Conotoxin SmIVB from Conus stercusmuscarum (Fly-specked cone).